The chain runs to 292 residues: Protein rogdi homolog (292 aa).

Over residues 1–12 the composition is skewed to polar residues; it reads MEVQSLTITTNY. Residues 1–25 are disordered; sequence MEVQSLTITTNYPPKPASPNPQDIR.

Belongs to the rogdi family.

The protein localises to the nucleus envelope. In Caenorhabditis elegans, this protein is Protein rogdi homolog.